A 268-amino-acid polypeptide reads, in one-letter code: MAVGKNKGLSKGGKKGGKKKVVDPFSRKDWYDVKAPNMFQTRQIGKTLVNRTQGQRIASDYLKGRVFEVSLADLQKDIDPERSFRKFRLIAEDVQDRNVLCNFHGMDLTTDKYRSMVKKWQTLIEAIVEAKTIDGYLLRVFCIGFTAKDQQSQRKTCYAQQSQVRKIRARMTDIITNEVSGADLKQLVNKLALDSIAKDIEKSCQRIYPLHDVYIRKVKVLKKPRFDVSKLLELHGDGGGKSVEAVVSSEGAVIDRPEGYEPPVQEAV.

Residues 1–21 (MAVGKNKGLSKGGKKGGKKKV) form a disordered region.

The protein belongs to the eukaryotic ribosomal protein eS1 family. Component of the small ribosomal subunit. Mature ribosomes consist of a small (40S) and a large (60S) subunit. The 40S subunit contains about 33 different proteins and 1 molecule of RNA (18S). The 60S subunit contains about 49 different proteins and 3 molecules of RNA (28S, 5.8S and 5S).

It localises to the cytoplasm. Essential for oogenesis; required for late follicle cell development. The protein is Small ribosomal subunit protein eS1 of Drosophila sechellia (Fruit fly).